A 406-amino-acid chain; its full sequence is Arginine deiminase (406 aa).

Residue C396 is the Amidino-cysteine intermediate of the active site.

It belongs to the arginine deiminase family.

The protein resides in the cytoplasm. It catalyses the reaction L-arginine + H2O = L-citrulline + NH4(+). It participates in amino-acid degradation; L-arginine degradation via ADI pathway; carbamoyl phosphate from L-arginine: step 1/2. The sequence is that of Arginine deiminase from Vibrio vulnificus (strain CMCP6).